The primary structure comprises 159 residues: UPF0262 protein PHZ_c2197 (159 aa).

It belongs to the UPF0262 family.

The protein is UPF0262 protein PHZ_c2197 of Phenylobacterium zucineum (strain HLK1).